Here is a 401-residue protein sequence, read N- to C-terminus: Aspartokinase (401 aa).

It belongs to the aspartokinase family.

It catalyses the reaction L-aspartate + ATP = 4-phospho-L-aspartate + ADP. It participates in amino-acid biosynthesis; L-lysine biosynthesis via DAP pathway; (S)-tetrahydrodipicolinate from L-aspartate: step 1/4. It functions in the pathway amino-acid biosynthesis; L-methionine biosynthesis via de novo pathway; L-homoserine from L-aspartate: step 1/3. The protein operates within amino-acid biosynthesis; L-threonine biosynthesis; L-threonine from L-aspartate: step 1/5. The polypeptide is Aspartokinase (lysC) (Rickettsia conorii (strain ATCC VR-613 / Malish 7)).